We begin with the raw amino-acid sequence, 252 residues long: Indole-3-glycerol phosphate synthase (252 aa).

It belongs to the TrpC family.

It carries out the reaction 1-(2-carboxyphenylamino)-1-deoxy-D-ribulose 5-phosphate + H(+) = (1S,2R)-1-C-(indol-3-yl)glycerol 3-phosphate + CO2 + H2O. It functions in the pathway amino-acid biosynthesis; L-tryptophan biosynthesis; L-tryptophan from chorismate: step 4/5. The polypeptide is Indole-3-glycerol phosphate synthase (Listeria monocytogenes serotype 4a (strain HCC23)).